Here is a 105-residue protein sequence, read N- to C-terminus: Malonate decarboxylase acyl carrier protein (105 aa).

Residue Ser-28 is modified to O-(phosphoribosyl dephospho-coenzyme A)serine.

This sequence belongs to the MdcC family. Post-translationally, covalently binds the prosthetic group of malonate decarboxylase.

It is found in the cytoplasm. In terms of biological role, subunit of malonate decarboxylase, it is an acyl carrier protein to which acetyl and malonyl thioester residues are bound via a 2'-(5''-phosphoribosyl)-3'-dephospho-CoA prosthetic group and turn over during the catalytic mechanism. The sequence is that of Malonate decarboxylase acyl carrier protein from Bradyrhizobium diazoefficiens (strain JCM 10833 / BCRC 13528 / IAM 13628 / NBRC 14792 / USDA 110).